The chain runs to 311 residues: Methionyl-tRNA formyltransferase (311 aa).

109 to 112 (SLLP) is a binding site for (6S)-5,6,7,8-tetrahydrofolate.

Belongs to the Fmt family.

It catalyses the reaction L-methionyl-tRNA(fMet) + (6R)-10-formyltetrahydrofolate = N-formyl-L-methionyl-tRNA(fMet) + (6S)-5,6,7,8-tetrahydrofolate + H(+). Its function is as follows. Attaches a formyl group to the free amino group of methionyl-tRNA(fMet). The formyl group appears to play a dual role in the initiator identity of N-formylmethionyl-tRNA by promoting its recognition by IF2 and preventing the misappropriation of this tRNA by the elongation apparatus. In Moorella thermoacetica (strain ATCC 39073 / JCM 9320), this protein is Methionyl-tRNA formyltransferase.